We begin with the raw amino-acid sequence, 543 residues long: Glutamyl-tRNA(Gln) amidotransferase subunit B-1, chloroplastic/mitochondrial (543 aa).

The tract at residues 1–47 (MIRAGGPSPSPRGRRAGPIRLPRRAPSSTPTRAKTEEKASADASSRT) is disordered. Basic residues predominate over residues 12-23 (RGRRAGPIRLPR).

The protein belongs to the GatB/GatE family. GatB subfamily. In terms of assembly, subunit of the heterotrimeric GatCAB amidotransferase (AdT) complex, composed of A, B and C subunits.

The protein localises to the mitochondrion. It localises to the plastid. The protein resides in the chloroplast. The catalysed reaction is L-glutamyl-tRNA(Gln) + L-glutamine + ATP + H2O = L-glutaminyl-tRNA(Gln) + L-glutamate + ADP + phosphate + H(+). Allows the formation of correctly charged Gln-tRNA(Gln) through the transamidation of misacylated Glu-tRNA(Gln) in chloroplasts and mitochondria. The reaction takes place in the presence of glutamine and ATP through an activated gamma-phospho-Glu-tRNA(Gln). This Micromonas commoda (strain RCC299 / NOUM17 / CCMP2709) (Picoplanktonic green alga) protein is Glutamyl-tRNA(Gln) amidotransferase subunit B-1, chloroplastic/mitochondrial.